A 304-amino-acid chain; its full sequence is tRNA pseudouridine synthase B (304 aa).

Catalysis depends on D44, which acts as the Nucleophile.

Belongs to the pseudouridine synthase TruB family. Type 1 subfamily.

The catalysed reaction is uridine(55) in tRNA = pseudouridine(55) in tRNA. In terms of biological role, responsible for synthesis of pseudouridine from uracil-55 in the psi GC loop of transfer RNAs. The protein is tRNA pseudouridine synthase B of Novosphingobium aromaticivorans (strain ATCC 700278 / DSM 12444 / CCUG 56034 / CIP 105152 / NBRC 16084 / F199).